The primary structure comprises 349 residues: Aminomethyltransferase (349 aa).

Belongs to the GcvT family. As to quaternary structure, the glycine cleavage system is composed of four proteins: P, T, L and H.

It carries out the reaction N(6)-[(R)-S(8)-aminomethyldihydrolipoyl]-L-lysyl-[protein] + (6S)-5,6,7,8-tetrahydrofolate = N(6)-[(R)-dihydrolipoyl]-L-lysyl-[protein] + (6R)-5,10-methylene-5,6,7,8-tetrahydrofolate + NH4(+). Its function is as follows. The glycine cleavage system catalyzes the degradation of glycine. This is Aminomethyltransferase from Thermus thermophilus (strain ATCC 27634 / DSM 579 / HB8).